A 400-amino-acid chain; its full sequence is Coenzyme A biosynthesis bifunctional protein CoaBC (400 aa).

A phosphopantothenoylcysteine decarboxylase region spans residues 1 to 190 (MKLNGKHIVV…SQKQDLQGLN (190 aa)). Catalysis depends on Cys-158, which acts as the Proton donor. The tract at residues 191–400 (VSITAGPTRE…EIIERYQKTL (210 aa)) is phosphopantothenate--cysteine ligase. Residues 273–275 (GCA), Asp-279, Lys-289, 305–308 (PDII), Phe-324, Lys-338, and Lys-342 contribute to the CTP site.

In the N-terminal section; belongs to the HFCD (homo-oligomeric flavin containing Cys decarboxylase) superfamily. This sequence in the C-terminal section; belongs to the PPC synthetase family. Mg(2+) is required as a cofactor. The cofactor is FMN.

It carries out the reaction N-[(R)-4-phosphopantothenoyl]-L-cysteine + H(+) = (R)-4'-phosphopantetheine + CO2. The catalysed reaction is (R)-4'-phosphopantothenate + L-cysteine + CTP = N-[(R)-4-phosphopantothenoyl]-L-cysteine + CMP + diphosphate + H(+). Its pathway is cofactor biosynthesis; coenzyme A biosynthesis; CoA from (R)-pantothenate: step 2/5. It participates in cofactor biosynthesis; coenzyme A biosynthesis; CoA from (R)-pantothenate: step 3/5. Catalyzes two sequential steps in the biosynthesis of coenzyme A. In the first step cysteine is conjugated to 4'-phosphopantothenate to form 4-phosphopantothenoylcysteine. In the second step the latter compound is decarboxylated to form 4'-phosphopantotheine. The sequence is that of Coenzyme A biosynthesis bifunctional protein CoaBC from Haemophilus influenzae (strain ATCC 51907 / DSM 11121 / KW20 / Rd).